A 429-amino-acid polypeptide reads, in one-letter code: MTQLLKAKEGVITREMEVVAAEERKSPEEIRQKVALGEVVIPANVNHQNLHPKGIGAGLKVKVNANLGTSENRCFYEDELKKVKVAIKAGADAIMDLSTGGNLDEIRRAIIKESSVPVGTVPLYQAAAETLNKYGDISRLDPELLFDVIEKQAADGVDFMTVHVGVTREILKVLDRFPRVTEVVSRGGSLTIAWMEKNGRENPLYEQFDRLLAICRKYDVTLSLGDGLRPGSIADATDQLQIMELMKLGELVKYAQNQGVQVMVEGPGHVPINQIEMNVKLMKRLCANAPFYVLGPLVTDIAPGYDHITAAIGGAWAAYFGADFLCYVTPAEHLGLPTVEDVEEGVIALKIAAHAADLARGNREAWNRDYEMSVARKELNWERQFELAINPERARKMRIERGSQDIKSCSMCGELCAMKIMNERGGKNA.

Residues asparagine 66, methionine 95, tyrosine 124, histidine 163, 185 to 187, 226 to 229, and glutamate 265 each bind substrate; these read SRG and DGLR. Histidine 269 is a binding site for Zn(2+). Tyrosine 292 provides a ligand contact to substrate. Position 333 (histidine 333) interacts with Zn(2+). [4Fe-4S] cluster is bound by residues cysteine 409, cysteine 412, and cysteine 416.

The protein belongs to the ThiC family. It depends on [4Fe-4S] cluster as a cofactor.

The enzyme catalyses 5-amino-1-(5-phospho-beta-D-ribosyl)imidazole + S-adenosyl-L-methionine = 4-amino-2-methyl-5-(phosphooxymethyl)pyrimidine + CO + 5'-deoxyadenosine + formate + L-methionine + 3 H(+). It participates in cofactor biosynthesis; thiamine diphosphate biosynthesis. In terms of biological role, catalyzes the synthesis of the hydroxymethylpyrimidine phosphate (HMP-P) moiety of thiamine from aminoimidazole ribotide (AIR) in a radical S-adenosyl-L-methionine (SAM)-dependent reaction. This is Phosphomethylpyrimidine synthase from Carboxydothermus hydrogenoformans (strain ATCC BAA-161 / DSM 6008 / Z-2901).